The following is a 283-amino-acid chain: Thymidylate synthase (283 aa).

Arg22 contacts dUMP. The active-site Nucleophile is Cys160. Residues 180-183 (RSCD), Asn191, and 221-223 (HIY) each bind dUMP. Asp183 provides a ligand contact to (6R)-5,10-methylene-5,6,7,8-tetrahydrofolate. Position 282 (Ser282) interacts with (6R)-5,10-methylene-5,6,7,8-tetrahydrofolate.

Belongs to the thymidylate synthase family. Bacterial-type ThyA subfamily. Homodimer.

It is found in the cytoplasm. It carries out the reaction dUMP + (6R)-5,10-methylene-5,6,7,8-tetrahydrofolate = 7,8-dihydrofolate + dTMP. It participates in pyrimidine metabolism; dTTP biosynthesis. Functionally, catalyzes the reductive methylation of 2'-deoxyuridine-5'-monophosphate (dUMP) to 2'-deoxythymidine-5'-monophosphate (dTMP) while utilizing 5,10-methylenetetrahydrofolate (mTHF) as the methyl donor and reductant in the reaction, yielding dihydrofolate (DHF) as a by-product. This enzymatic reaction provides an intracellular de novo source of dTMP, an essential precursor for DNA biosynthesis. The chain is Thymidylate synthase from Psychromonas ingrahamii (strain DSM 17664 / CCUG 51855 / 37).